The primary structure comprises 689 residues: Elongation factor G (689 aa).

Residues 9–283 enclose the tr-type G domain; that stretch reads AKFRNIGIMA…AIIEFMPSPL (275 aa). Residues 18–25, 82–86, and 136–139 contribute to the GTP site; these read AHIDAGKT, DTPGH, and NKMD.

The protein belongs to the TRAFAC class translation factor GTPase superfamily. Classic translation factor GTPase family. EF-G/EF-2 subfamily.

It localises to the cytoplasm. Functionally, catalyzes the GTP-dependent ribosomal translocation step during translation elongation. During this step, the ribosome changes from the pre-translocational (PRE) to the post-translocational (POST) state as the newly formed A-site-bound peptidyl-tRNA and P-site-bound deacylated tRNA move to the P and E sites, respectively. Catalyzes the coordinated movement of the two tRNA molecules, the mRNA and conformational changes in the ribosome. The polypeptide is Elongation factor G (Clostridium botulinum (strain 657 / Type Ba4)).